We begin with the raw amino-acid sequence, 337 residues long: Glyceraldehyde-3-phosphate dehydrogenase 3 (337 aa).

Residues 12–13 (RM) and Lys80 each bind NAD(+). Residues 152–154 (SCT) and Thr183 contribute to the D-glyceraldehyde 3-phosphate site. Cys153 acts as the Nucleophile in catalysis. An NAD(+)-binding site is contributed by Asn184. D-glyceraldehyde 3-phosphate is bound by residues Arg198, 211 to 212 (TG), and Arg234. Asn317 lines the NAD(+) pocket.

This sequence belongs to the glyceraldehyde-3-phosphate dehydrogenase family. In terms of assembly, homotetramer.

It localises to the cytoplasm. It catalyses the reaction D-glyceraldehyde 3-phosphate + phosphate + NAD(+) = (2R)-3-phospho-glyceroyl phosphate + NADH + H(+). Its pathway is carbohydrate degradation; glycolysis; pyruvate from D-glyceraldehyde 3-phosphate: step 1/5. It functions in the pathway carbohydrate biosynthesis; gluconeogenesis. Catalyzes the oxidative phosphorylation of glyceraldehyde 3-phosphate (G3P) to 1,3-bisphosphoglycerate (BPG) using the cofactor NAD. The first reaction step involves the formation of a hemiacetal intermediate between G3P and a cysteine residue, and this hemiacetal intermediate is then oxidized to a thioester, with concomitant reduction of NAD to NADH. The reduced NADH is then exchanged with the second NAD, and the thioester is attacked by a nucleophilic inorganic phosphate to produce BPG. This is Glyceraldehyde-3-phosphate dehydrogenase 3 (gap3) from Nostoc sp. (strain PCC 7120 / SAG 25.82 / UTEX 2576).